The chain runs to 264 residues: 3-methyl-2-oxobutanoate hydroxymethyltransferase (264 aa).

Mg(2+) is bound by residues Asp-45 and Asp-84. 3-methyl-2-oxobutanoate is bound by residues 45–46 (DS), Asp-84, and Lys-112. Position 114 (Glu-114) interacts with Mg(2+). Residue Glu-181 is the Proton acceptor of the active site.

Belongs to the PanB family. In terms of assembly, homodecamer; pentamer of dimers. Mg(2+) serves as cofactor.

Its subcellular location is the cytoplasm. It carries out the reaction 3-methyl-2-oxobutanoate + (6R)-5,10-methylene-5,6,7,8-tetrahydrofolate + H2O = 2-dehydropantoate + (6S)-5,6,7,8-tetrahydrofolate. The protein operates within cofactor biosynthesis; (R)-pantothenate biosynthesis; (R)-pantoate from 3-methyl-2-oxobutanoate: step 1/2. In terms of biological role, catalyzes the reversible reaction in which hydroxymethyl group from 5,10-methylenetetrahydrofolate is transferred onto alpha-ketoisovalerate to form ketopantoate. The sequence is that of 3-methyl-2-oxobutanoate hydroxymethyltransferase from Erwinia tasmaniensis (strain DSM 17950 / CFBP 7177 / CIP 109463 / NCPPB 4357 / Et1/99).